We begin with the raw amino-acid sequence, 327 residues long: Prenyl transferase janC (327 aa).

Residues 3-23 (FPGAGPILGAIAVSSCLYFLF) traverse the membrane as a helical segment. Isopentenyl diphosphate contacts are provided by Lys63 and His96. Asp103 and Asp107 together coordinate Mg(2+). Arg112 and Lys196 together coordinate dimethylallyl diphosphate. The N-linked (GlcNAc...) asparagine glycan is linked to Asn211.

It belongs to the FPP/GGPP synthase family.

It is found in the membrane. The protein operates within secondary metabolite biosynthesis. Prenyl transferase; part of the gene cluster that mediates the biosynthesis of the indole diterpenes janthitremanes such as shearinine K or shearinine A. The geranylgeranyl diphosphate (GGPP) synthase janG catalyzes the first step in janthitremane biosynthesis via conversion of farnesyl pyrophosphate and isopentyl pyrophosphate into geranylgeranyl pyrophosphate (GGPP). Condensation of indole-3-glycerol phosphate with GGPP by the prenyl transferase janC then forms 3-geranylgeranylindole (3-GGI). Epoxidation by the FAD-dependent monooxygenase janM leads to a epoxidized-GGI that is substrate of the terpene cyclase janB for cyclization to yield paspaline. Paspaline is subsequently converted to 13-desoxypaspaline by the cytochrome P450 monooxygenase janP, via beta-PC-M6 in a series of alpha-face oxidations. The cytochrome P450 monooxygenase janQ is proposed to carry out sequential beta-face oxidation steps at C-7 and C-13 of 13-desoxypaspaline to form paspalicine and paspalinine respectively. The indole diterpene prenyltransferase janD may then convert paspalinine into shearinine K which is substrate of janO and/or additional enzymes for oxidation and cyclization to generate shearinine A. The polypeptide is Prenyl transferase janC (Penicillium janthinellum (Penicillium vitale)).